The following is a 73-amino-acid chain: UPF0150 protein ssl0259 (73 aa).

Belongs to the UPF0150 family.

In Synechocystis sp. (strain ATCC 27184 / PCC 6803 / Kazusa), this protein is UPF0150 protein ssl0259.